The chain runs to 334 residues: DNA-directed RNA polymerase subunit alpha (334 aa).

The interval 1–231 (MNMIKIEPYI…KQMSIFGVDL (231 aa)) is alpha N-terminal domain (alpha-NTD). The segment at 247-334 (ELKTLMIKID…NRKLAKLKSN (88 aa)) is alpha C-terminal domain (alpha-CTD).

It belongs to the RNA polymerase alpha chain family. As to quaternary structure, homodimer. The RNAP catalytic core consists of 2 alpha, 1 beta/beta' and 1 omega subunit. When a sigma factor is associated with the core the holoenzyme is formed, which can initiate transcription.

The catalysed reaction is RNA(n) + a ribonucleoside 5'-triphosphate = RNA(n+1) + diphosphate. DNA-dependent RNA polymerase catalyzes the transcription of DNA into RNA using the four ribonucleoside triphosphates as substrates. This is DNA-directed RNA polymerase subunit alpha from Helicobacter hepaticus (strain ATCC 51449 / 3B1).